Reading from the N-terminus, the 447-residue chain is NADP-specific glutamate dehydrogenase (447 aa).

Substrate-binding residues include Lys-92, Gln-113, and Lys-116. Residue Lys-128 is the Proton donor of the active site. Gly-167 serves as a coordination point for substrate. Thr-211 and Asn-242 together coordinate NADP(+). A substrate-binding site is contributed by Ser-380.

The protein belongs to the Glu/Leu/Phe/Val dehydrogenases family. As to quaternary structure, homohexamer.

The enzyme catalyses L-glutamate + NADP(+) + H2O = 2-oxoglutarate + NH4(+) + NADPH + H(+). With respect to regulation, competitively inhibited by homoserine and by glutamine. Catalyzes the reversible oxidative deamination of glutamate to alpha-ketoglutarate and ammonia. The sequence is that of NADP-specific glutamate dehydrogenase from Escherichia coli (strain K12).